Consider the following 149-residue polypeptide: Calmodulin-2 (149 aa).

Residue Ala-2 is modified to N-acetylalanine. EF-hand domains follow at residues 8–43 (EQIA…LGQN), 44–79 (PTEA…KMKD), 81–116 (DSEE…LGEK), and 117–149 (LTDE…MTSK). The Ca(2+) site is built by Asp-21, Asp-23, Asp-25, Thr-27, Glu-32, Asp-57, Asp-59, Asn-61, Thr-63, Glu-68, Asp-94, Asp-96, Asn-98, and Glu-105. Lys-116 is subject to N6,N6,N6-trimethyllysine. Ca(2+)-binding residues include Asp-130, Asp-132, Asp-134, Gln-136, and Glu-141.

It belongs to the calmodulin family.

Its function is as follows. Calmodulin mediates the control of a large number of enzymes, ion channels and other proteins by Ca(2+). Among the enzymes to be stimulated by the calmodulin-Ca(2+) complex are a number of protein kinases and phosphatases. The sequence is that of Calmodulin-2 (CAM2) from Branchiostoma lanceolatum (Common lancelet).